Reading from the N-terminus, the 368-residue chain is Alanine racemase (368 aa).

The active-site Proton acceptor; specific for D-alanine is the lysine 40. N6-(pyridoxal phosphate)lysine is present on lysine 40. Residue arginine 136 coordinates substrate. The Proton acceptor; specific for L-alanine role is filled by tyrosine 263. Methionine 310 serves as a coordination point for substrate.

It belongs to the alanine racemase family. It depends on pyridoxal 5'-phosphate as a cofactor.

It catalyses the reaction L-alanine = D-alanine. The protein operates within amino-acid biosynthesis; D-alanine biosynthesis; D-alanine from L-alanine: step 1/1. Functionally, catalyzes the interconversion of L-alanine and D-alanine. May also act on other amino acids. The protein is Alanine racemase (alr) of Streptococcus uberis (strain ATCC BAA-854 / 0140J).